We begin with the raw amino-acid sequence, 695 residues long: Polyribonucleotide nucleotidyltransferase (695 aa).

Asp486 and Asp492 together coordinate Mg(2+). Positions 553 to 612 constitute a KH domain; the sequence is PRIETMQINTSKIATVIGPGGKQIRQIIERSGAQVDINDDGVINIAASTQESINKAKELI. The region spanning 622 to 690 is the S1 motif domain; that stretch reads GKVYNGRVTS…EKGQLKLSHK (69 aa).

It belongs to the polyribonucleotide nucleotidyltransferase family. Mg(2+) is required as a cofactor.

The protein localises to the cytoplasm. The enzyme catalyses RNA(n+1) + phosphate = RNA(n) + a ribonucleoside 5'-diphosphate. Its function is as follows. Involved in mRNA degradation. Catalyzes the phosphorolysis of single-stranded polyribonucleotides processively in the 3'- to 5'-direction. The polypeptide is Polyribonucleotide nucleotidyltransferase (Chlamydia trachomatis serovar D (strain ATCC VR-885 / DSM 19411 / UW-3/Cx)).